Here is a 281-residue protein sequence, read N- to C-terminus: 4-diphosphocytidyl-2-C-methyl-D-erythritol kinase (281 aa).

The active site involves Lys-11. 92 to 102 contributes to the ATP binding site; that stretch reads LVSAGLAGGSA. The active site involves Asp-132.

This sequence belongs to the GHMP kinase family. IspE subfamily.

It catalyses the reaction 4-CDP-2-C-methyl-D-erythritol + ATP = 4-CDP-2-C-methyl-D-erythritol 2-phosphate + ADP + H(+). It functions in the pathway isoprenoid biosynthesis; isopentenyl diphosphate biosynthesis via DXP pathway; isopentenyl diphosphate from 1-deoxy-D-xylulose 5-phosphate: step 3/6. Functionally, catalyzes the phosphorylation of the position 2 hydroxy group of 4-diphosphocytidyl-2C-methyl-D-erythritol. The polypeptide is 4-diphosphocytidyl-2-C-methyl-D-erythritol kinase (Ehrlichia ruminantium (strain Gardel)).